The following is a 219-amino-acid chain: Histone H1.4 (219 aa).

Positions 1–15 (MSETAPAAPAAPAPA) are enriched in low complexity. The tract at residues 1–41 (MSETAPAAPAAPAPAEKTPVKKKARKAAGGAKRKTSGPPVS) is disordered. N-acetylserine is present on Ser2. Ser2 carries the post-translational modification Phosphoserine. Lys17 is subject to N6-acetyllysine. Residue Thr18 is modified to Phosphothreonine. Over residues 20 to 35 (VKKKARKAAGGAKRKT) the composition is skewed to basic residues. Lys26 carries the N6-acetyllysine; alternate modification. Lys26 carries the N6-methyllysine; alternate modification. Lys34 bears the N6-(beta-hydroxybutyryl)lysine; alternate mark. Residue Lys34 is modified to N6-succinyllysine; alternate. Residue Ser36 is modified to Phosphoserine. One can recognise an H15 domain in the interval 36 to 109 (SGPPVSELIT…GASGSFKLNK (74 aa)). Position 52 is an N6-(beta-hydroxybutyryl)lysine (Lys52). At Arg54 the chain carries Citrulline. N6-(beta-hydroxybutyryl)lysine occurs at positions 64, 85, 90, and 106. The disordered stretch occupies residues 92-219 (TLVQTKGTGA…KPKKTAAKKK (128 aa)). Residues 119–140 (KAKRAGAAKAKKPAGAAKKPKK) show a composition bias toward basic residues. The residue at position 146 (Thr146) is a Phosphothreonine. Basic residues-rich tracts occupy residues 149 to 160 (KSTKKTPKKAKK) and 168 to 185 (KKAKSPKKAKATKAKKAP). Residue Ser150 is modified to ADP-ribosylserine. The residue at position 187 (Ser187) is a Phosphoserine. Over residues 192-219 (KTVKPKAAKPKTSKPKAAKPKKTAAKKK) the composition is skewed to basic residues.

It belongs to the histone H1/H5 family. Citrullination at Arg-54 (H1R54ci) by PADI4 takes place within the DNA-binding site of H1 and results in its displacement from chromatin and global chromatin decondensation, thereby promoting pluripotency and stem cell maintenance. In terms of processing, ADP-ribosylated on Ser-55, Ser-113 and Ser-150 in response to DNA damage. Post-translationally, H1 histones are progressively phosphorylated during the cell cycle, becoming maximally phosphorylated during late G2 phase and M phase, and being dephosphorylated sharply thereafter. Acetylated at Lys-26. Deacetylated at Lys-26 by SIRT1. In terms of processing, hydroxybutyrylation of histones is induced by starvation.

The protein localises to the nucleus. It is found in the chromosome. In terms of biological role, histone H1 protein binds to linker DNA between nucleosomes forming the macromolecular structure known as the chromatin fiber. Histones H1 are necessary for the condensation of nucleosome chains into higher-order structured fibers. Also acts as a regulator of individual gene transcription through chromatin remodeling, nucleosome spacing and DNA methylation. The sequence is that of Histone H1.4 from Mus musculus (Mouse).